The following is a 274-amino-acid chain: Glycerol uptake facilitator protein (274 aa).

Transmembrane regions (helical) follow at residues Ala3–Ala23 and Ile38–Ile58. The short motif at Asn64–Ala66 is the NPA 1 element. The next 3 membrane-spanning stretches (helical) occupy residues Val82–Leu102, Phe131–Ile151, and Ile164–Ile184. The short motif at Asn185–Ala187 is the NPA 2 element. A helical membrane pass occupies residues Ile238–Val258.

Belongs to the MIP/aquaporin (TC 1.A.8) family.

The protein localises to the cell membrane. It catalyses the reaction glycerol(in) = glycerol(out). In terms of biological role, mediates glycerol diffusion across the cytoplasmic membrane via a pore-type mechanism. The chain is Glycerol uptake facilitator protein (glpF) from Bacillus subtilis (strain 168).